The sequence spans 423 residues: MFS-type transporter phiL (423 aa).

A run of 3 helical transmembrane segments spans residues 25-45 (IFCFVTYIAANVGLALSNSFI), 82-102 (IGLASVGPIIGPSLGPVLGGV), and 111-131 (YIFVILAAAALIFLFLLIIFF). N-linked (GlcNAc...) asparagine glycans are attached at residues N141 and N151. Positions 166–185 (DHASGRNLPNAGSKKSNPRN) are disordered. The next 4 membrane-spanning stretches (helical) occupy residues 203-223 (VIIFNGLSYAIYYAITSSLSY), 238-258 (LSYIPIGVGTIIAALGNGFVV), 298-318 (IAVPAVVVACISMLGYAWTMS), and 321-341 (LPPIIPLLCLFVFGWGGTAAY). The N-linked (GlcNAc...) asparagine glycan is linked to N352. The next 2 helical transmembrane spans lie at 369–389 (LLGAGGAAVIMPLINVLGMGW) and 390–410 (TFTAIAGLWVLLSPLVLFLLF).

This sequence belongs to the major facilitator superfamily. CAR1 family.

It is found in the membrane. Functionally, MFS-type transporter; part of the gene cluster that mediates the biosynthesis of the antihypercholesterolemic agents phomoidrides which are dimeric anhydrides. In Fungal sp. (strain ATCC 74256), this protein is MFS-type transporter phiL.